Consider the following 150-residue polypeptide: CCAAT/enhancer-binding protein gamma (150 aa).

Lys3 participates in a covalent cross-link: Glycyl lysine isopeptide (Lys-Gly) (interchain with G-Cter in SUMO2). A disordered region spans residues 27-94 (GLQQVPQLVP…QKAQDTLQRV (68 aa)). Residues 28-37 (LQQVPQLVPA) are compositionally biased toward low complexity. Residues 56 to 72 (SPMDRNSDEYRQRRERN) are compositionally biased toward basic and acidic residues. A bZIP domain is found at 62-125 (SDEYRQRRER…SVLKDLFLEH (64 aa)). The segment at 66–93 (RQRRERNNMAVKKSRLKSKQKAQDTLQR) is basic motif. The tract at residues 97-118 (LKEENERLEAKIKLLTKELSVL) is leucine-zipper.

Belongs to the bZIP family. C/EBP subfamily. Binds DNA as a dimer and can form stable heterodimers with CEBPA and CEBPB. Interacts with ZNF638; this interaction increases transcriptional activation.

It is found in the nucleus. Functionally, transcription factor that binds to the promoter and the enhancer regions of target genes. Binds to the enhancer element PRE-I (positive regulatory element-I) of the IL-4 gene. Binds to the promoter and the enhancer of the immunoglobulin heavy chain. Binds to GPE1, a cis-acting element in the G-CSF gene promoter. The sequence is that of CCAAT/enhancer-binding protein gamma (CEBPG) from Homo sapiens (Human).